A 405-amino-acid polypeptide reads, in one-letter code: Dematin (405 aa).

4 disordered regions span residues 1–30, 79–158, 173–192, and 203–332; these read MERL…PSSI, PRSR…GSPQ, FPAA…TDYW, and TEWR…DRGN. A compositionally biased stretch (low complexity) spans 11–29; sequence SPGSVSPSRDSSVPGSPSS. Phosphoserine occurs at positions 16, 18, 26, 92, 96, 105, 110, 113, and 156. The span at 108 to 123 shows a compositional bias: polar residues; it reads IISQASAPRTTGTPRT. Acidic residues predominate over residues 216–227; that stretch reads EEEEEEEDDDSG. Residues 224–308 are interaction with RASGRF2; that stretch reads DDSGEEMKAL…SRLQSTEFSP (85 aa). S226 bears the Phosphoserine mark. Composition is skewed to basic and acidic residues over residues 228 to 242 and 252 to 261; these read EEMK…EELS and ILKEEMEKSL. Phosphoserine is present on residues S269, S279, S289, S303, S315, S333, S372, and S383. Over residues 276 to 322 the composition is skewed to polar residues; that stretch reads FHTSLHQGTSKSSSLPAYGRTTLSRLQSTEFSPSGSETGSPGLQNGE. The region spanning 337-405 is the HP domain; it reads VLEQKIYPYE…NELKKKASLF (69 aa). S403 carries the post-translational modification Phosphoserine; by PKA.

It belongs to the villin/gelsolin family. In terms of assembly, monomeric (isoform 2); under reducing conditions. Self-associates. Exists under oxidizing condition as a trimer of two isoforms 2 and isoform 1 linked by disulfide bonds. Found in a complex with DMTN, F-actin and spectrin. Found in a complex with ADD2, DMTN and SLC2A1. Interacts with F-actin, ITPKB, RASGRF2 and spectrin. Isoform 2 interacts with SLC2A1 (via C-terminus cytoplasmic region). Isoform 1 and isoform 2 interact (phosphorylated form) with plasmodium berghei 14-3-3 protein; the interaction occurs in a PKA-dependent manner. Phosphorylated. Phosphorylation at Ser-403 by PKA causes the C-terminal headpiece domain to associate with the N-terminal core domain, and leads to the inhibition of its actin bundling activity. Post-translationally, the N-terminus is blocked. In terms of tissue distribution, expressed in platelets (at protein level). Expressed in heart, brain, lung, skeletal muscle, and kidney.

It is found in the cytoplasm. It localises to the cytosol. The protein resides in the perinuclear region. The protein localises to the cytoskeleton. Its subcellular location is the cell membrane. It is found in the membrane. It localises to the endomembrane system. The protein resides in the cell projection. In terms of biological role, membrane-cytoskeleton-associated protein with F-actin-binding activity that induces F-actin bundles formation and stabilization. Its F-actin-bundling activity is reversibly regulated upon its phosphorylation by the cAMP-dependent protein kinase A (PKA). Binds to the erythrocyte membrane glucose transporter-1 SLC2A1/GLUT1, and hence stabilizes and attaches the spectrin-actin network to the erythrocytic plasma membrane. Plays a role in maintaining the functional integrity of PKA-activated erythrocyte shape and the membrane mechanical properties. Also plays a role as a modulator of actin dynamics in fibroblasts; acts as a negative regulator of the RhoA activation pathway. In platelets, functions as a regulator of internal calcium mobilization across the dense tubular system that affects platelet granule secretion pathways and aggregation. Also required for the formation of a diverse set of cell protrusions, such as filopodia and lamellipodia, necessary for platelet cell spreading, motility and migration. Acts as a tumor suppressor and inhibits malignant cell transformation. In Homo sapiens (Human), this protein is Dematin (DMTN).